A 104-amino-acid polypeptide reads, in one-letter code: Pyrimidine/purine nucleoside phosphorylase (104 aa).

It belongs to the nucleoside phosphorylase PpnP family.

It carries out the reaction a purine D-ribonucleoside + phosphate = a purine nucleobase + alpha-D-ribose 1-phosphate. It catalyses the reaction adenosine + phosphate = alpha-D-ribose 1-phosphate + adenine. The catalysed reaction is cytidine + phosphate = cytosine + alpha-D-ribose 1-phosphate. The enzyme catalyses guanosine + phosphate = alpha-D-ribose 1-phosphate + guanine. It carries out the reaction inosine + phosphate = alpha-D-ribose 1-phosphate + hypoxanthine. It catalyses the reaction thymidine + phosphate = 2-deoxy-alpha-D-ribose 1-phosphate + thymine. The catalysed reaction is uridine + phosphate = alpha-D-ribose 1-phosphate + uracil. The enzyme catalyses xanthosine + phosphate = alpha-D-ribose 1-phosphate + xanthine. Functionally, catalyzes the phosphorolysis of diverse nucleosides, yielding D-ribose 1-phosphate and the respective free bases. Can use uridine, adenosine, guanosine, cytidine, thymidine, inosine and xanthosine as substrates. Also catalyzes the reverse reactions. The chain is Pyrimidine/purine nucleoside phosphorylase from Janthinobacterium sp. (strain Marseille) (Minibacterium massiliensis).